The sequence spans 259 residues: Ribosomal RNA small subunit methyltransferase A (259 aa).

The S-adenosyl-L-methionine site is built by N13, L15, G40, E61, D85, and N103.

The protein belongs to the class I-like SAM-binding methyltransferase superfamily. rRNA adenine N(6)-methyltransferase family. RsmA subfamily.

It localises to the cytoplasm. It carries out the reaction adenosine(1518)/adenosine(1519) in 16S rRNA + 4 S-adenosyl-L-methionine = N(6)-dimethyladenosine(1518)/N(6)-dimethyladenosine(1519) in 16S rRNA + 4 S-adenosyl-L-homocysteine + 4 H(+). Functionally, specifically dimethylates two adjacent adenosines (A1518 and A1519) in the loop of a conserved hairpin near the 3'-end of 16S rRNA in the 30S particle. May play a critical role in biogenesis of 30S subunits. This Neisseria gonorrhoeae (strain NCCP11945) protein is Ribosomal RNA small subunit methyltransferase A.